The sequence spans 779 residues: Catalase-peroxidase (779 aa).

Positions 148–270 (WHSAGTYRIT…LGAVQMGLIY (123 aa)) form a cross-link, tryptophyl-tyrosyl-methioninium (Trp-Tyr) (with M-296). The Proton acceptor role is filled by His-149. The tryptophyl-tyrosyl-methioninium (Tyr-Met) (with W-148) cross-link spans 270–296 (YVNPEGPNGKPDPIAAAKDIRETFFRM). His-311 is a heme b binding site.

Belongs to the peroxidase family. Peroxidase/catalase subfamily. In terms of assembly, homodimer or homotetramer. Heme b is required as a cofactor. Post-translationally, formation of the three residue Trp-Tyr-Met cross-link is important for the catalase, but not the peroxidase activity of the enzyme.

The catalysed reaction is H2O2 + AH2 = A + 2 H2O. It catalyses the reaction 2 H2O2 = O2 + 2 H2O. Functionally, bifunctional enzyme with both catalase and broad-spectrum peroxidase activity. In Bradyrhizobium diazoefficiens (strain JCM 10833 / BCRC 13528 / IAM 13628 / NBRC 14792 / USDA 110), this protein is Catalase-peroxidase.